Here is a 364-residue protein sequence, read N- to C-terminus: Large ribosomal subunit protein uL22m (364 aa).

This sequence belongs to the universal ribosomal protein uL22 family. Component of the mitochondrial large ribosomal subunit (mt-LSU). Mature N.crassa 74S mitochondrial ribosomes consist of a small (37S) and a large (54S) subunit. The 37S small subunit contains a 16S ribosomal RNA (16S mt-rRNA) and 32 different proteins. The 54S large subunit contains a 23S rRNA (23S mt-rRNA) and 42 different proteins. uL22m forms the wall of the exit tunnel.

The protein resides in the mitochondrion. In terms of biological role, component of the mitochondrial ribosome (mitoribosome), a dedicated translation machinery responsible for the synthesis of mitochondrial genome-encoded proteins, including at least some of the essential transmembrane subunits of the mitochondrial respiratory chain. The mitoribosomes are attached to the mitochondrial inner membrane and translation products are cotranslationally integrated into the membrane. The polypeptide is Large ribosomal subunit protein uL22m (mrpl22) (Neurospora crassa (strain ATCC 24698 / 74-OR23-1A / CBS 708.71 / DSM 1257 / FGSC 987)).